The sequence spans 619 residues: 1-deoxy-D-xylulose-5-phosphate synthase (619 aa).

Thiamine diphosphate-binding positions include His-74 and 115–117 (GHS). Asp-146 lines the Mg(2+) pocket. Thiamine diphosphate contacts are provided by residues 147 to 148 (GA), Asn-175, Tyr-285, and Glu-365. Asn-175 serves as a coordination point for Mg(2+).

The protein belongs to the transketolase family. DXPS subfamily. In terms of assembly, homodimer. Mg(2+) is required as a cofactor. It depends on thiamine diphosphate as a cofactor.

The catalysed reaction is D-glyceraldehyde 3-phosphate + pyruvate + H(+) = 1-deoxy-D-xylulose 5-phosphate + CO2. It participates in metabolic intermediate biosynthesis; 1-deoxy-D-xylulose 5-phosphate biosynthesis; 1-deoxy-D-xylulose 5-phosphate from D-glyceraldehyde 3-phosphate and pyruvate: step 1/1. Its function is as follows. Catalyzes the acyloin condensation reaction between C atoms 2 and 3 of pyruvate and glyceraldehyde 3-phosphate to yield 1-deoxy-D-xylulose-5-phosphate (DXP). This Clostridium perfringens (strain ATCC 13124 / DSM 756 / JCM 1290 / NCIMB 6125 / NCTC 8237 / Type A) protein is 1-deoxy-D-xylulose-5-phosphate synthase.